The primary structure comprises 275 residues: uncharacterized protein (275 aa).

Position 45 (D45) interacts with NADPH. Residues Y50 and H111 each act as proton donor in the active site. NADPH contacts are provided by S139, Q162, L191, K196, S232, S233, and R237.

The protein belongs to the aldo/keto reductase family.

It localises to the cytoplasm. The protein localises to the nucleus. This is an uncharacterized protein from Schizosaccharomyces pombe (strain 972 / ATCC 24843) (Fission yeast).